Reading from the N-terminus, the 362-residue chain is MPLPQLDPAQYAAQLAEKAARLEELLAPFDAPAAEVFDSPREHYRLRAEFRLWREGGQRHYAMFEQGDKHKAILIDDFPIASRRINELMPQLKAAWQASEVLSFKLFQVEFLTTLSGDALITLAYHRPLDEAWQAEAEQLAADLGVSLVGRSKGKRIVIGRDYVEEQLVVAGRSFRYRQPEGAFTQPNGEVCQKMLNWAHEALGERDDDLLELYCGNGNFTLPLATRVRRVLATEISKTSVNAALANIEDNGLDNIELVRLSAEELTQALNEVRPFRRLAGIDLKSYSFGSVFVDPPRAGMDPDTCELTRRFERILYISCNPETLAQNIAQLADTHRIERCALFDQFPYTHHMEAGVLLVRR.

Residues Q186, Y214, N219, E235, and D295 each contribute to the S-adenosyl-L-methionine site. The Nucleophile role is filled by C320. E354 acts as the Proton acceptor in catalysis.

Belongs to the class I-like SAM-binding methyltransferase superfamily. RNA M5U methyltransferase family. TrmA subfamily.

It catalyses the reaction uridine(54) in tRNA + S-adenosyl-L-methionine = 5-methyluridine(54) in tRNA + S-adenosyl-L-homocysteine + H(+). The catalysed reaction is uridine(341) in tmRNA + S-adenosyl-L-methionine = 5-methyluridine(341) in tmRNA + S-adenosyl-L-homocysteine + H(+). Functionally, dual-specificity methyltransferase that catalyzes the formation of 5-methyluridine at position 54 (m5U54) in all tRNAs, and that of position 341 (m5U341) in tmRNA (transfer-mRNA). The polypeptide is tRNA/tmRNA (uracil-C(5))-methyltransferase (Stutzerimonas stutzeri (strain A1501) (Pseudomonas stutzeri)).